We begin with the raw amino-acid sequence, 903 residues long: Protein translocase subunit SecA (903 aa).

ATP contacts are provided by residues Q89, 107–111, and D502; that span reads GEGKT. Zn(2+) is bound by residues C886, C888, C897, and H898.

The protein belongs to the SecA family. Monomer and homodimer. Part of the essential Sec protein translocation apparatus which comprises SecA, SecYEG and auxiliary proteins SecDF-YajC and YidC. Zn(2+) serves as cofactor.

The protein localises to the cell inner membrane. It localises to the cytoplasm. It carries out the reaction ATP + H2O + cellular proteinSide 1 = ADP + phosphate + cellular proteinSide 2.. Part of the Sec protein translocase complex. Interacts with the SecYEG preprotein conducting channel. Has a central role in coupling the hydrolysis of ATP to the transfer of proteins into and across the cell membrane, serving both as a receptor for the preprotein-SecB complex and as an ATP-driven molecular motor driving the stepwise translocation of polypeptide chains across the membrane. The chain is Protein translocase subunit SecA from Sinorhizobium medicae (strain WSM419) (Ensifer medicae).